The following is a 105-amino-acid chain: uncharacterized protein (105 aa).

The 68-residue stretch at 33–100 (LYALDAGTTD…SEDLRVLVVF (68 aa)) folds into the Cupin type-2 domain.

This is an uncharacterized protein from Streptomyces coelicolor (strain ATCC BAA-471 / A3(2) / M145).